Here is a 555-residue protein sequence, read N- to C-terminus: Small ribosomal subunit protein uS3m (555 aa).

A disordered region spans residues 1–20 (MARKGNPISVRLGKNRSSDS).

Belongs to the universal ribosomal protein uS3 family.

The protein resides in the mitochondrion. In Brassica napus (Rape), this protein is Small ribosomal subunit protein uS3m (RPS3).